Consider the following 1621-residue polypeptide: ALK tyrosine kinase receptor (1621 aa).

An N-terminal signal peptide occupies residues 1-18 (MGAAGFLWLLPPLLLAAA). Residues 19–1042 (SYSGAATDQR…PHLPLSLILS (1024 aa)) are Extracellular-facing. Positions 48–70 (RLQRKSLAVDFVVPSLFRVYARD) are heparin-binding region. 11 N-linked (GlcNAc...) asparagine glycosylation sites follow: Asn174, Asn248, Asn289, Asn328, Asn415, Asn428, Asn449, Asn567, Asn575, Asn631, and Asn673. In terms of domain architecture, MAM 1 spans 268-431 (LECSFDFPCE…DFFALKNCSE (164 aa)). The LDL-receptor class A domain maps to 441–477 (LQSSFTCWNGTVLQLGQACDFHQDCAQGEDEGQLCSK). In terms of domain architecture, MAM 2 spans 482–640 (FYCNFENGFC…NISISLDCYL (159 aa)). Cys692 and Cys705 are joined by a disulfide. An N-linked (GlcNAc...) asparagine glycan is attached at Asn713. A disulfide bridge links Cys787 with Cys798. N-linked (GlcNAc...) asparagine glycans are attached at residues Asn812, Asn868, and Asn890. A disulfide bridge links Cys910 with Cys932. The N-linked (GlcNAc...) asparagine glycan is linked to Asn990. Disulfide bonds link Cys991–Cys999, Cys994–Cys1010, and Cys1012–Cys1025. The interval 991–1029 (CSHCEVDECHMDPESHKVICFCDHGTVLADDGVSCIVSP) is EGF-like. Residues 1043 to 1063 (VVTSALVAALVLAFSGIMIVY) traverse the membrane as a helical segment. The Cytoplasmic segment spans residues 1064–1621 (RRKHQELQAM…SKNKVTQPGP (558 aa)). Phosphotyrosine occurs at positions 1082, 1096, and 1100. The 277-residue stretch at 1120–1396 (ITLIRGLGHG…IEYCTQDPDV (277 aa)) folds into the Protein kinase domain. ATP-binding positions include 1126–1134 (LGHGAFGEV) and His1128. Tyr1135 carries the phosphotyrosine modification. ATP contacts are provided by residues Lys1154 and 1201-1203 (ELM). Residue Asp1253 is the Proton acceptor of the active site. ATP is bound at residue Asp1274. Phosphotyrosine is present on Tyr1282. The tract at residues 1412–1556 (EEKVPMRPKD…WTGPGAGPRR (145 aa)) is disordered. A compositionally biased stretch (basic and acidic residues) spans 1414 to 1423 (KVPMRPKDPE). The segment covering 1441–1461 (SAAPQPAALTAPGPSVKKPPG) has biased composition (low complexity). Residues 1462–1472 (AGAGAGAGAGA) show a composition bias toward gly residues. Over residues 1506–1518 (NKPTSLWNPTYGS) the composition is skewed to polar residues. Tyr1516 carries the post-translational modification Phosphotyrosine. The span at 1543 to 1552 (AEGGWTGPGA) shows a compositional bias: gly residues.

It belongs to the protein kinase superfamily. Tyr protein kinase family. Insulin receptor subfamily. Homodimer; homodimerizes following heparin- and ligand-binding. Interacts with CBL, IRS1, PIK3R1 and PLCG1. Interacts with FRS2 and SHC1. Interacts with PTN and MDK. In terms of processing, phosphorylated at tyrosine residues by autocatalysis, which activates kinase activity. In cells not stimulated by a ligand, receptor protein tyrosine phosphatase beta and zeta complex (PTPRB/PTPRZ1) dephosphorylates ALK at the sites in ALK that are undergoing autophosphorylation through autoactivation. As to expression, mainly expressed in central nervous system (CNS) and other parts of the brain such as the paraventricular nucleus (PVN) of the hypothalamus. Expression is also found in peripheral nervous systems, eye, nasal epithelium, olfactory nerve, tongue, skin, tissue surrounding the esophagus, stomach, midgut, as well as testis and ovary.

It is found in the cell membrane. It carries out the reaction L-tyrosyl-[protein] + ATP = O-phospho-L-tyrosyl-[protein] + ADP + H(+). Its activity is regulated as follows. Activated upon ALKAL2 ligand-binding. ALKAL2-driven activation is coupled with heparin-binding. Following ligand-binding, homodimerizes and autophosphorylates, activating its kinase activity. Inactivated through dephosphorylation by receptor protein tyrosine phosphatase beta and zeta complex (PTPRB/PTPRZ1) when there is no stimulation by a ligand. Its function is as follows. Neuronal receptor tyrosine kinase that is essentially and transiently expressed in specific regions of the central and peripheral nervous systems and plays an important role in the genesis and differentiation of the nervous system. Also acts as a key thinness protein involved in the resistance to weight gain: in hypothalamic neurons, controls energy expenditure acting as a negative regulator of white adipose tissue lipolysis and sympathetic tone to fine-tune energy homeostasis. Following activation by ALKAL2 ligand at the cell surface, transduces an extracellular signal into an intracellular response. In contrast, ALKAL1 is not a potent physiological ligand for ALK. Ligand-binding to the extracellular domain induces tyrosine kinase activation, leading to activation of the mitogen-activated protein kinase (MAPK) pathway. Phosphorylates almost exclusively at the first tyrosine of the Y-x-x-x-Y-Y motif. Induces tyrosine phosphorylation of CBL, FRS2, IRS1 and SHC1, as well as of the MAP kinases MAPK1/ERK2 and MAPK3/ERK1. ALK activation may also be regulated by pleiotrophin (PTN) and midkine (MDK). PTN-binding induces MAPK pathway activation, which is important for the anti-apoptotic signaling of PTN and regulation of cell proliferation. MDK-binding induces phosphorylation of the ALK target insulin receptor substrate (IRS1), activates mitogen-activated protein kinases (MAPKs) and PI3-kinase, resulting also in cell proliferation induction. Drives NF-kappa-B activation, probably through IRS1 and the activation of the AKT serine/threonine kinase. Recruitment of IRS1 to activated ALK and the activation of NF-kappa-B are essential for the autocrine growth and survival signaling of MDK. The protein is ALK tyrosine kinase receptor of Mus musculus (Mouse).